The following is a 282-amino-acid chain: B3 domain-containing protein At5g06250 (282 aa).

Positions 46 to 159 (FEKSLTPSDV…RLFIGWRRRG (114 aa)) form a DNA-binding region, TF-B3.

It is found in the nucleus. The protein is B3 domain-containing protein At5g06250 of Arabidopsis thaliana (Mouse-ear cress).